Here is a 254-residue protein sequence, read N- to C-terminus: Dihydroorotate dehydrogenase B (NAD(+)), electron transfer subunit (254 aa).

The region spanning 1–99 is the FAD-binding FR-type domain; the sequence is MLQTEMKVIQ…LGPLGKGFDI (99 aa). FAD is bound by residues 50-53, 67-69, and 74-75; these read RPIS, LYR, and GT. Cys-218, Cys-223, Cys-226, and Cys-241 together coordinate [2Fe-2S] cluster.

Belongs to the PyrK family. Heterotetramer of 2 PyrK and 2 PyrD type B subunits. [2Fe-2S] cluster serves as cofactor. The cofactor is FAD.

It functions in the pathway pyrimidine metabolism; UMP biosynthesis via de novo pathway; orotate from (S)-dihydroorotate (NAD(+) route): step 1/1. Its function is as follows. Responsible for channeling the electrons from the oxidation of dihydroorotate from the FMN redox center in the PyrD type B subunit to the ultimate electron acceptor NAD(+). The sequence is that of Dihydroorotate dehydrogenase B (NAD(+)), electron transfer subunit from Listeria monocytogenes serotype 4b (strain F2365).